An 80-amino-acid chain; its full sequence is U-poneritoxin(01)-Om3a (80 aa).

The N-terminal stretch at 1-25 (MKPSGLALAFLVVFMMAIMYNSVQA) is a signal peptide. A propeptide spanning residues 26–39 (AAIADADAEAEAIA) is cleaved from the precursor.

The protein belongs to the formicidae venom precursor-01 superfamily. Post-translationally, truncated sequences of this peptide have also been found in the venom. It is possible they have been cleaved in the venom. As to expression, expressed by the venom gland.

It localises to the secreted. Cationic amphipathic alpha-helical peptide with antimicrobial activities against E.coli (MIC=3.1 uM), S.aureus (MIC=25 uM), and S.cerevisiae (MIC=50 uM). Also shows histamine-releasing activity (37.5% at 10 uM). Does not show hemolytic activity, even at 50 uM. The polypeptide is U-poneritoxin(01)-Om3a (Odontomachus monticola (Trap-jaw ant)).